The following is a 193-amino-acid chain: dCTP deaminase (193 aa).

Residues 110–115 (RSSLAR), aspartate 128, 136–138 (VLE), tyrosine 171, lysine 178, and glutamine 182 contribute to the dCTP site. Catalysis depends on glutamate 138, which acts as the Proton donor/acceptor. The disordered stretch occupies residues 174–193 (RKNAKYKDQQEAVASRISQD).

This sequence belongs to the dCTP deaminase family. In terms of assembly, homotrimer.

It catalyses the reaction dCTP + H2O + H(+) = dUTP + NH4(+). Its pathway is pyrimidine metabolism; dUMP biosynthesis; dUMP from dCTP (dUTP route): step 1/2. Functionally, catalyzes the deamination of dCTP to dUTP. The protein is dCTP deaminase of Shewanella sp. (strain W3-18-1).